Reading from the N-terminus, the 174-residue chain is Crossover junction endodeoxyribonuclease RuvC (174 aa).

Residues D8, E68, and D140 contribute to the active site. D8, E68, and D140 together coordinate Mg(2+).

It belongs to the RuvC family. Homodimer which binds Holliday junction (HJ) DNA. The HJ becomes 2-fold symmetrical on binding to RuvC with unstacked arms; it has a different conformation from HJ DNA in complex with RuvA. In the full resolvosome a probable DNA-RuvA(4)-RuvB(12)-RuvC(2) complex forms which resolves the HJ. Mg(2+) serves as cofactor.

The protein localises to the cytoplasm. It carries out the reaction Endonucleolytic cleavage at a junction such as a reciprocal single-stranded crossover between two homologous DNA duplexes (Holliday junction).. The RuvA-RuvB-RuvC complex processes Holliday junction (HJ) DNA during genetic recombination and DNA repair. Endonuclease that resolves HJ intermediates. Cleaves cruciform DNA by making single-stranded nicks across the HJ at symmetrical positions within the homologous arms, yielding a 5'-phosphate and a 3'-hydroxyl group; requires a central core of homology in the junction. The consensus cleavage sequence is 5'-(A/T)TT(C/G)-3'. Cleavage occurs on the 3'-side of the TT dinucleotide at the point of strand exchange. HJ branch migration catalyzed by RuvA-RuvB allows RuvC to scan DNA until it finds its consensus sequence, where it cleaves and resolves the cruciform DNA. This chain is Crossover junction endodeoxyribonuclease RuvC, found in Legionella pneumophila subsp. pneumophila (strain Philadelphia 1 / ATCC 33152 / DSM 7513).